Here is a 419-residue protein sequence, read N- to C-terminus: Mitochondrial chaperone BCS1 (419 aa).

Residues 1–15 (MPLSDFVLALKDNPY) are Mitochondrial intermembrane-facing. Residues 16–32 (FGAGFGLVGVGTALALA) form a helical membrane-spanning segment. The Mitochondrial matrix segment spans residues 33–419 (RKGAQLGLVA…AIQNAESLRR (387 aa)). Tyr181 is subject to Phosphotyrosine. Residue 230–237 (GPPGCGKS) coordinates ATP.

This sequence belongs to the AAA ATPase family. BCS1 subfamily. In terms of assembly, interacts with LETM1.

It is found in the mitochondrion inner membrane. It catalyses the reaction ATP + H2O = ADP + phosphate + H(+). Its function is as follows. Chaperone necessary for the incorporation of Rieske iron-sulfur protein UQCRFS1 into the mitochondrial respiratory chain complex III. Plays an important role in the maintenance of mitochondrial tubular networks, respiratory chain assembly and formation of the LETM1 complex. In Bos taurus (Bovine), this protein is Mitochondrial chaperone BCS1 (BCS1L).